Here is a 905-residue protein sequence, read N- to C-terminus: Cadherin-2B (905 aa).

The N-terminal stretch at 1 to 28 is a signal peptide; it reads MCRKQPFLLPTLLGILAALMLQQGPVEA. A propeptide spanning residues 29 to 160 is cleaved from the precursor; the sequence is FGGSRLCKTG…NSNGLQRQKR (132 aa). Cadherin domains lie at 161 to 268, 269 to 383, 384 to 498, 499 to 604, and 605 to 713; these read DWVI…RPEF, LHQI…PPEF, TAMT…NPYF, TPNP…DNAP, and YVYP…TTAP. At 161 to 723 the chain is on the extracellular side; that stretch reads DWVIPPINVP…IIGTGLGTGA (563 aa). Residue glutamate 171 participates in Ca(2+) binding. An N-linked (GlcNAc...) asparagine glycan is attached at asparagine 191. Aspartate 227, glutamate 229, aspartate 260, methionine 261, asparagine 262, aspartate 263, and asparagine 264 together coordinate Ca(2+). Residue asparagine 274 is glycosylated (N-linked (GlcNAc...) asparagine). Residues aspartate 294, aspartate 296, and asparagine 302 each coordinate Ca(2+). Asparagine 326 carries an N-linked (GlcNAc...) asparagine glycan. Aspartate 354 contacts Ca(2+). Asparagine 403, asparagine 573, asparagine 623, asparagine 651, and asparagine 692 each carry an N-linked (GlcNAc...) asparagine glycan. The helical transmembrane segment at 724-745 threads the bilayer; the sequence is IIAILLCIIILLTLVLMFVVWM. Topologically, residues 746 to 905 are cytoplasmic; that stretch reads KRRDKERQAK…LADMYGGSDD (160 aa). Disordered stretches follow at residues 774-800 and 862-883; these read EEGG…PDTI and SGST…EQDY. The segment covering 775–784 has biased composition (acidic residues); that stretch reads EGGGEEDQDY. Positions 862 to 879 are enriched in low complexity; it reads SGSTAGSLSSLNSSSSGG.

As to quaternary structure, homodimer (via extracellular region). Can also form heterodimers with other cadherins (via extracellular region). Dimerization occurs in trans, i.e. with a cadherin chain from another cell.

Its subcellular location is the cell membrane. The protein resides in the sarcolemma. It is found in the cell junction. The protein localises to the cell surface. It localises to the desmosome. Its subcellular location is the adherens junction. In terms of biological role, calcium-dependent cell adhesion protein; preferentially mediates homotypic cell-cell adhesion. Cadherins may thus contribute to the sorting of heterogeneous cell types, and thereby play an important role during embryonic development. Required for proper neurite branching. Required for pre- and postsynaptic organization. The chain is Cadherin-2B (cdh2-b) from Xenopus laevis (African clawed frog).